The chain runs to 189 residues: Putative nucleotidase BC_3386 (189 aa).

The protein belongs to the 5'(3')-deoxyribonucleotidase family.

This chain is Putative nucleotidase BC_3386, found in Bacillus cereus (strain ATCC 14579 / DSM 31 / CCUG 7414 / JCM 2152 / NBRC 15305 / NCIMB 9373 / NCTC 2599 / NRRL B-3711).